Reading from the N-terminus, the 145-residue chain is Flagellar assembly factor FliW (145 aa).

This sequence belongs to the FliW family. As to quaternary structure, interacts with translational regulator CsrA and flagellin(s).

The protein resides in the cytoplasm. Acts as an anti-CsrA protein, binds CsrA and prevents it from repressing translation of its target genes, one of which is flagellin. Binds to flagellin and participates in the assembly of the flagellum. The sequence is that of Flagellar assembly factor FliW from Thermosipho africanus (strain TCF52B).